Here is a 705-residue protein sequence, read N- to C-terminus: 1,4-alpha-glucan branching enzyme GlgB (705 aa).

Asp-309 functions as the Nucleophile in the catalytic mechanism. Glu-360 (proton donor) is an active-site residue. Positions Val-654–Ala-705 are disordered. Residues Ala-691–Ala-705 show a composition bias toward basic and acidic residues.

Belongs to the glycosyl hydrolase 13 family. GlgB subfamily. Monomer.

The enzyme catalyses Transfers a segment of a (1-&gt;4)-alpha-D-glucan chain to a primary hydroxy group in a similar glucan chain.. It participates in glycan biosynthesis; glycogen biosynthesis. In terms of biological role, catalyzes the formation of the alpha-1,6-glucosidic linkages in glycogen by scission of a 1,4-alpha-linked oligosaccharide from growing alpha-1,4-glucan chains and the subsequent attachment of the oligosaccharide to the alpha-1,6 position. This Deinococcus radiodurans (strain ATCC 13939 / DSM 20539 / JCM 16871 / CCUG 27074 / LMG 4051 / NBRC 15346 / NCIMB 9279 / VKM B-1422 / R1) protein is 1,4-alpha-glucan branching enzyme GlgB.